The following is a 308-amino-acid chain: 4-hydroxy-3-methylbut-2-enyl diphosphate reductase 2 (308 aa).

Cys12 provides a ligand contact to [4Fe-4S] cluster. (2E)-4-hydroxy-3-methylbut-2-enyl diphosphate-binding residues include His41 and His74. Residues His41 and His74 each contribute to the dimethylallyl diphosphate site. Residues His41 and His74 each contribute to the isopentenyl diphosphate site. Residue Cys96 participates in [4Fe-4S] cluster binding. Residue His124 participates in (2E)-4-hydroxy-3-methylbut-2-enyl diphosphate binding. His124 lines the dimethylallyl diphosphate pocket. Position 124 (His124) interacts with isopentenyl diphosphate. The Proton donor role is filled by Glu126. Thr164 contacts (2E)-4-hydroxy-3-methylbut-2-enyl diphosphate. Cys194 contributes to the [4Fe-4S] cluster binding site. The (2E)-4-hydroxy-3-methylbut-2-enyl diphosphate site is built by Ser222, Ser223, Asn224, and Ser266. Dimethylallyl diphosphate is bound by residues Ser222, Ser223, Asn224, and Ser266. Isopentenyl diphosphate-binding residues include Ser222, Ser223, Asn224, and Ser266.

Belongs to the IspH family. [4Fe-4S] cluster serves as cofactor.

It catalyses the reaction isopentenyl diphosphate + 2 oxidized [2Fe-2S]-[ferredoxin] + H2O = (2E)-4-hydroxy-3-methylbut-2-enyl diphosphate + 2 reduced [2Fe-2S]-[ferredoxin] + 2 H(+). It carries out the reaction dimethylallyl diphosphate + 2 oxidized [2Fe-2S]-[ferredoxin] + H2O = (2E)-4-hydroxy-3-methylbut-2-enyl diphosphate + 2 reduced [2Fe-2S]-[ferredoxin] + 2 H(+). It functions in the pathway isoprenoid biosynthesis; dimethylallyl diphosphate biosynthesis; dimethylallyl diphosphate from (2E)-4-hydroxy-3-methylbutenyl diphosphate: step 1/1. It participates in isoprenoid biosynthesis; isopentenyl diphosphate biosynthesis via DXP pathway; isopentenyl diphosphate from 1-deoxy-D-xylulose 5-phosphate: step 6/6. Functionally, catalyzes the conversion of 1-hydroxy-2-methyl-2-(E)-butenyl 4-diphosphate (HMBPP) into a mixture of isopentenyl diphosphate (IPP) and dimethylallyl diphosphate (DMAPP). Acts in the terminal step of the DOXP/MEP pathway for isoprenoid precursor biosynthesis. The polypeptide is 4-hydroxy-3-methylbut-2-enyl diphosphate reductase 2 (Bradyrhizobium diazoefficiens (strain JCM 10833 / BCRC 13528 / IAM 13628 / NBRC 14792 / USDA 110)).